Here is a 216-residue protein sequence, read N- to C-terminus: Talanin (216 aa).

In terms of tissue distribution, isoform 4 is expressed in placenta, lung, kidney and pancreas.

In terms of biological role, may play a role in uric acid excretion. The chain is Talanin (ZNF365) from Homo sapiens (Human).